We begin with the raw amino-acid sequence, 436 residues long: Mitochondrial distribution and morphology protein 12 (436 aa).

An SMP-LTD domain is found at 1-436 (MSIEVNWGTA…VFPSFYTFLI (436 aa)). Acidic residues predominate over residues 73–84 (DEDGDSGSEISE). 3 disordered regions span residues 73-98 (DEDG…WDRT), 184-275 (AVAG…RMRE), and 352-380 (GSGS…PHQK). Basic and acidic residues predominate over residues 85–98 (ELQHRTHDNPWDRT). 2 stretches are compositionally biased toward polar residues: residues 190 to 206 (PFTT…QGNK) and 222 to 243 (DSSN…SNRS). The segment covering 244–255 (SHPDGHPEHNDD) has biased composition (basic and acidic residues). Positions 256–267 (PISSSENPLLQN) are enriched in polar residues.

Belongs to the MDM12 family. As to quaternary structure, component of the ER-mitochondria encounter structure (ERMES) or MDM complex, composed of mmm1, mdm10, mdm12 and mdm34. A mmm1 homodimer associates with one molecule of mdm12 on each side in a pairwise head-to-tail manner, and the SMP-LTD domains of mmm1 and mdm12 generate a continuous hydrophobic tunnel for phospholipid trafficking.

Its subcellular location is the mitochondrion outer membrane. The protein resides in the endoplasmic reticulum membrane. Its function is as follows. Component of the ERMES/MDM complex, which serves as a molecular tether to connect the endoplasmic reticulum (ER) and mitochondria. Components of this complex are involved in the control of mitochondrial shape and protein biogenesis, and function in nonvesicular lipid trafficking between the ER and mitochondria. Mdm12 is required for the interaction of the ER-resident membrane protein mmm1 and the outer mitochondrial membrane-resident beta-barrel protein mdm10. The mdm12-mmm1 subcomplex functions in the major beta-barrel assembly pathway that is responsible for biogenesis of all mitochondrial outer membrane beta-barrel proteins, and acts in a late step after the SAM complex. The mdm10-mdm12-mmm1 subcomplex further acts in the TOM40-specific pathway after the action of the mdm12-mmm1 complex. Essential for establishing and maintaining the structure of mitochondria and maintenance of mtDNA nucleoids. The polypeptide is Mitochondrial distribution and morphology protein 12 (Emericella nidulans (strain FGSC A4 / ATCC 38163 / CBS 112.46 / NRRL 194 / M139) (Aspergillus nidulans)).